Reading from the N-terminus, the 85-residue chain is Large ribosomal subunit protein bL27 (85 aa).

Residues 1–25 (MAHKKAGSSSKNGRDSNPQYLGVKR) are disordered. The span at 7–19 (GSSSKNGRDSNPQ) shows a compositional bias: polar residues.

Belongs to the bacterial ribosomal protein bL27 family.

The polypeptide is Large ribosomal subunit protein bL27 (Micrococcus luteus (strain ATCC 4698 / DSM 20030 / JCM 1464 / CCM 169 / CCUG 5858 / IAM 1056 / NBRC 3333 / NCIMB 9278 / NCTC 2665 / VKM Ac-2230) (Micrococcus lysodeikticus)).